The primary structure comprises 250 residues: Agamous-like MADS-box protein AGL8 homolog (250 aa).

In terms of domain architecture, MADS-box spans 3–57 (RGRVQLKRIENKINRQVTFSKRRSGLLKKAHEISVLCDAEVGLIVFSTKGKLFEY). The K-box domain occupies 88–178 (PGSWTLEHAK…SKKVKEREKE (91 aa)).

In terms of tissue distribution, abundant in vegetative organs.

It localises to the nucleus. Probable transcription factor. This chain is Agamous-like MADS-box protein AGL8 homolog, found in Solanum tuberosum (Potato).